A 472-amino-acid chain; its full sequence is Glutamine synthetase (472 aa).

One can recognise a GS beta-grasp domain in the interval 17-101; that stretch reads NNVKFVLLRF…IRCSVYEPTT (85 aa). The GS catalytic domain maps to 109-472; that stretch reads PRSIAIRAEN…HPVEFEMYYA (364 aa). 2 residues coordinate Mg(2+): E134 and E136. ATP is bound at residue E212. Residues E217 and E225 each contribute to the Mg(2+) site. L-glutamate is bound by residues 269-270 and G270; that span reads NG. H274 is a Mg(2+) binding site. Residues 276–278 and S278 contribute to the ATP site; that span reads NMS. 3 residues coordinate L-glutamate: R326, E332, and R344. ATP is bound by residues R344, R349, and K357. E362 lines the Mg(2+) pocket. R364 is an L-glutamate binding site. Y402 carries the post-translational modification O-AMP-tyrosine.

Belongs to the glutamine synthetase family. In terms of assembly, oligomer of 12 subunits arranged in the form of two hexameric ring. Mg(2+) is required as a cofactor.

It is found in the cytoplasm. It catalyses the reaction L-glutamate + NH4(+) + ATP = L-glutamine + ADP + phosphate + H(+). With respect to regulation, the activity of this enzyme could be controlled by adenylation under conditions of abundant glutamine. Catalyzes the ATP-dependent biosynthesis of glutamine from glutamate and ammonia. The polypeptide is Glutamine synthetase (Haemophilus influenzae (strain ATCC 51907 / DSM 11121 / KW20 / Rd)).